The sequence spans 835 residues: uncharacterized protein (835 aa).

Disordered regions lie at residues 1–38 (MKTSRLSTVPTSSSSTSTSSSPSSSSGSGSSTNTVGSR), 317–477 (DFDL…QSGR), 489–668 (SLSK…IKRR), 721–750 (DLENNNNNNSNSNSNSNSNNNSKRSSVSSF), and 810–835 (QEQQEGEQQEERQQEQILDEDDELMF). 3 stretches are compositionally biased toward low complexity: residues 7–37 (STVPTSSSSTSTSSSPSSSSGSGSSTNTVGS), 328–351 (NNNNNNDNNNNNNTSTTRSKTPTT), and 361–395 (SSTNTTPTTTTTTTTTTTPNKTQSSSSTSLRSGSS). Composition is skewed to polar residues over residues 396-406 (IGNRTEVSSSI) and 415-424 (IIRSKSSLGT). Residues 432-442 (GGSGGGGGGGM) are compositionally biased toward gly residues. Over residues 449 to 477 (PISKTPTTMITKTASSSSPNLATSTQSGR) the composition is skewed to polar residues. Positions 489–510 (SLSKQSSSSNLTRSLPPIIKSP) are enriched in low complexity. Residues 511–521 (ISPPGPTPPAP) show a composition bias toward pro residues. The span at 522–629 (TLTKSKSTPS…STTSSATKKS (108 aa)) shows a compositional bias: low complexity. The span at 631 to 640 (ITKTNPTDEQ) shows a compositional bias: polar residues. 2 stretches are compositionally biased toward low complexity: residues 641–664 (TTTPKSITKTTTTTTTANSTSTSS) and 724–750 (NNNNNNSNSNSNSNSNNNSKRSSVSSF). Acidic residues predominate over residues 826-835 (ILDEDDELMF).

This is an uncharacterized protein from Dictyostelium discoideum (Social amoeba).